The following is a 109-amino-acid chain: uncharacterized protein (109 aa).

Positions alanine 10 to methionine 109 constitute an HTH hxlR-type domain.

This is an uncharacterized protein from Bacillus subtilis (strain 168).